The primary structure comprises 213 residues: Putative manganese efflux pump MntP (213 aa).

7 consecutive transmembrane segments (helical) span residues 6–26 (LGVL…GIGM), 34–54 (AFML…FGIL), 58–78 (ALGL…LFFL), 107–127 (GSGG…LFAP), 132–152 (LVVI…SLGT), 153–173 (VGAQ…IMTV), and 192–212 (LAGG…SASP).

Belongs to the MntP (TC 9.B.29) family.

The protein localises to the cell membrane. In terms of biological role, probably functions as a manganese efflux pump. The polypeptide is Putative manganese efflux pump MntP (Heliobacterium modesticaldum (strain ATCC 51547 / Ice1)).